The sequence spans 951 residues: Valine--tRNA ligase (951 aa).

The short motif at 42 to 52 is the 'HIGH' region element; it reads PNVTGSLHMGH. The 'KMSKS' region motif lies at 554–558; it reads KMSKS. Lys557 provides a ligand contact to ATP. Positions 880–944 form a coiled coil; the sequence is AGLINKEDEL…AEAKAKLIEQ (65 aa).

The protein belongs to the class-I aminoacyl-tRNA synthetase family. ValS type 1 subfamily. As to quaternary structure, monomer.

It is found in the cytoplasm. It catalyses the reaction tRNA(Val) + L-valine + ATP = L-valyl-tRNA(Val) + AMP + diphosphate. Functionally, catalyzes the attachment of valine to tRNA(Val). As ValRS can inadvertently accommodate and process structurally similar amino acids such as threonine, to avoid such errors, it has a 'posttransfer' editing activity that hydrolyzes mischarged Thr-tRNA(Val) in a tRNA-dependent manner. This Escherichia coli (strain K12) protein is Valine--tRNA ligase (valS).